A 20-amino-acid chain; its full sequence is Cathepsin L-like cysteine proteinase (20 aa).

It belongs to the peptidase C1 family.

Its subcellular location is the lysosome. Its function is as follows. Thiol protease. The polypeptide is Cathepsin L-like cysteine proteinase (Fasciola hepatica (Liver fluke)).